The chain runs to 322 residues: Cyanophycinase (322 aa).

Residues Ser178, Glu196, and His220 each act as charge relay system in the active site.

Belongs to the peptidase S51 family.

It catalyses the reaction [L-4-(L-arginin-2-N-yl)aspartate](n) + H2O = [L-4-(L-arginin-2-N-yl)aspartate](n-1) + L-4-(L-arginin-2-N-yl)aspartate. Exopeptidase that catalyzes the hydrolytic cleavage of multi-L-arginyl-poly-L-aspartic acid (cyanophycin; a water-insoluble reserve polymer) into aspartate-arginine dipeptides. The chain is Cyanophycinase (cphB) from Synechococcus elongatus.